Here is a 118-residue protein sequence, read N- to C-terminus: Small nuclear ribonucleoprotein Sm D2 (118 aa).

Positions 1 to 31 are disordered; sequence MSLLNKPKSEMTPEELQKREEEEFNTGPLSV. Ser-2 is subject to N-acetylserine. Glycyl lysine isopeptide (Lys-Gly) (interchain with G-Cter in SUMO2) cross-links involve residues Lys-6 and Lys-8. The span at 7–21 shows a compositional bias: basic and acidic residues; that stretch reads PKSEMTPEELQKREE. Ser-9 is modified (phosphoserine). A Phosphothreonine modification is found at Thr-12. A Sm domain is found at 29–115; it reads LSVLTQSVKN…VIVVLRNPLI (87 aa).

The protein belongs to the snRNP core protein family. Core component of the spliceosomal U1, U2, U4 and U5 small nuclear ribonucleoproteins (snRNPs), the building blocks of the spliceosome. Most spliceosomal snRNPs contain a common set of Sm proteins, SNRPB, SNRPD1, SNRPD2, SNRPD3, SNRPE, SNRPF and SNRPG that assemble in a heptameric protein ring on the Sm site of the small nuclear RNA to form the core snRNP. Component of the U1 snRNP. The U1 snRNP is composed of the U1 snRNA and the 7 core Sm proteins SNRPB, SNRPD1, SNRPD2, SNRPD3, SNRPE, SNRPF and SNRPG, and at least three U1 snRNP-specific proteins SNRNP70/U1-70K, SNRPA/U1-A and SNRPC/U1-C. Component of the U4/U6-U5 tri-snRNP complex composed of the U4, U6 and U5 snRNAs and at least PRPF3, PRPF4, PRPF6, PRPF8, PRPF31, SNRNP200, TXNL4A, SNRNP40, SNRPB, SNRPD1, SNRPD2, SNRPD3, SNRPE, SNRPF, SNRPG, DDX23, CD2BP2, PPIH, SNU13, EFTUD2, SART1 and USP39, plus LSM2, LSM3, LSM4, LSM5, LSM6, LSM7 and LSM8. Component of the minor spliceosome, which splices U12-type introns. Part of the SMN-Sm complex that contains SMN1, GEMIN2/SIP1, DDX20/GEMIN3, GEMIN4, GEMIN5, GEMIN6, GEMIN7, GEMIN8, STRAP/UNRIP and the Sm proteins SNRPB, SNRPD1, SNRPD2, SNRPD3, SNRPE, SNRPF and SNRPG; catalyzes core snRNPs assembly. Forms a 6S pICln-Sm complex composed of CLNS1A/pICln, SNRPD1, SNRPD2, SNRPE, SNRPF and SNRPG; ring-like structure where CLNS1A/pICln mimics additional Sm proteins and which is unable to assemble into the core snRNP. Interacts with SMN1; the interaction is direct. Interacts with GEMIN2; the interaction is direct. Interacts with SNRPD1; the interaction is direct. Interacts with SNRPF; the interaction is direct.

It is found in the cytoplasm. It localises to the cytosol. Its subcellular location is the nucleus. Functionally, plays a role in pre-mRNA splicing as a core component of the spliceosomal U1, U2, U4 and U5 small nuclear ribonucleoproteins (snRNPs), the building blocks of the spliceosome. Component of both the pre-catalytic spliceosome B complex and activated spliceosome C complexes. As a component of the minor spliceosome, involved in the splicing of U12-type introns in pre-mRNAs. This is Small nuclear ribonucleoprotein Sm D2 (SNRPD2) from Homo sapiens (Human).